Reading from the N-terminus, the 226-residue chain is Ribonuclease 3 (226 aa).

The region spanning Thr-5–Gly-127 is the RNase III domain. Position 40 (Glu-40) interacts with Mg(2+). Residue Asp-44 is part of the active site. Mg(2+) is bound by residues Asp-113 and Glu-116. The active site involves Glu-116. Residues Asp-154–Ser-224 form the DRBM domain.

Belongs to the ribonuclease III family. As to quaternary structure, homodimer. Mg(2+) serves as cofactor.

It localises to the cytoplasm. The enzyme catalyses Endonucleolytic cleavage to 5'-phosphomonoester.. Functionally, digests double-stranded RNA. Involved in the processing of primary rRNA transcript to yield the immediate precursors to the large and small rRNAs (23S and 16S). Processes some mRNAs, and tRNAs when they are encoded in the rRNA operon. Processes pre-crRNA and tracrRNA of type II CRISPR loci if present in the organism. The chain is Ribonuclease 3 from Xanthomonas axonopodis pv. citri (strain 306).